The primary structure comprises 88 residues: Outer membrane protein H.8 (88 aa).

An N-terminal signal peptide occupies residues 1–17 (MKKSLFAAALLSLALAA). Cys18 is lipidated: N-palmitoyl cysteine. The S-diacylglycerol cysteine moiety is linked to residue Cys18. 13 repeat units span residues 23–27 (AAEAP), 28–32 (AAEAS), 33–37 (STEAP), 38–42 (AAEAP), 43–47 (AAEAP), 48–52 (AAEAA), 53–57 (AAEAP), 58–62 (AAEAP), 63–67 (AAEAP), 68–72 (AAEAA), 73–77 (ATEAP), 78–82 (AAEAP), and 83–87 (AAEAA). Positions 23–87 (AAEAPAAEAS…AAEAPAAEAA (65 aa)) are 13 X 5 AA tandem repeats of [AS]-[AT]-E-A-[PAS]. Positions 23 to 88 (AAEAPAAEAS…AEAPAAEAAK (66 aa)) are disordered. Positions 25–88 (EAPAAEASST…AEAPAAEAAK (64 aa)) are enriched in low complexity.

It localises to the cell outer membrane. The chain is Outer membrane protein H.8 from Neisseria gonorrhoeae (strain ATCC 700825 / FA 1090).